The primary structure comprises 118 residues: Large ribosomal subunit protein bL19 (118 aa).

Belongs to the bacterial ribosomal protein bL19 family.

In terms of biological role, this protein is located at the 30S-50S ribosomal subunit interface and may play a role in the structure and function of the aminoacyl-tRNA binding site. The polypeptide is Large ribosomal subunit protein bL19 (rplS) (Serratia marcescens).